Consider the following 34-residue polypeptide: Turripeptide OL127 (34 aa).

Post-translationally, contains 4 disulfide bonds. As to expression, expressed by the venom duct.

Its subcellular location is the secreted. Its function is as follows. Acts as a neurotoxin by inhibiting an ion channel. This chain is Turripeptide OL127, found in Iotyrris olangoensis (Sea snail).